The sequence spans 405 residues: Tryptophan synthase beta chain (405 aa).

Lys-98 carries the post-translational modification N6-(pyridoxal phosphate)lysine.

It belongs to the TrpB family. Tetramer of two alpha and two beta chains. Pyridoxal 5'-phosphate is required as a cofactor.

The enzyme catalyses (1S,2R)-1-C-(indol-3-yl)glycerol 3-phosphate + L-serine = D-glyceraldehyde 3-phosphate + L-tryptophan + H2O. Its pathway is amino-acid biosynthesis; L-tryptophan biosynthesis; L-tryptophan from chorismate: step 5/5. Functionally, the beta subunit is responsible for the synthesis of L-tryptophan from indole and L-serine. The polypeptide is Tryptophan synthase beta chain (Afipia carboxidovorans (strain ATCC 49405 / DSM 1227 / KCTC 32145 / OM5) (Oligotropha carboxidovorans)).